The following is a 652-amino-acid chain: NAD(P)H-quinone oxidoreductase subunit 5, chloroplastic (652 aa).

16 helical membrane passes run 9 to 29, 40 to 60, 91 to 111, 124 to 144, 147 to 167, 188 to 208, 225 to 245, 258 to 278, 289 to 309, 327 to 347, 354 to 374, 395 to 415, 424 to 444, 482 to 502, 526 to 546, and 630 to 650; these read WLIPIFPLAGSLLIGIGLISF, YSFLIIALLGISLILSCLILF, PLTAVMLVIVTTVAILVLIYT, FFAYLSLFTTSMLGLVLSPNL, IYVFWELVGMCSYLLIGFWFT, GLLLGILGFYWMTGSFEFDVI, LAIFFGFLIFLGPVAKSAQFP, TPISALIHAATMVAAGVFLVA, FLMDLIAWTGAITAIIGATIA, LGYMIMAMGMGSYTASLFHLM, ALLFLSAGSTIHGMEPIVGFN, GNAFLIGTLSLCGIPPLACFW, AFVHSPLLWFIGWSTAGLTSF, TLPLIILTLFSITIGWIGTPF, LFIAGSSVGIALLGCYTAYLI, and ILMIIFTLLTILGISQTYYSL.

Belongs to the complex I subunit 5 family. In terms of assembly, NDH is composed of at least 16 different subunits, 5 of which are encoded in the nucleus.

The protein localises to the plastid. It localises to the chloroplast thylakoid membrane. The enzyme catalyses a plastoquinone + NADH + (n+1) H(+)(in) = a plastoquinol + NAD(+) + n H(+)(out). It carries out the reaction a plastoquinone + NADPH + (n+1) H(+)(in) = a plastoquinol + NADP(+) + n H(+)(out). In terms of biological role, NDH shuttles electrons from NAD(P)H:plastoquinone, via FMN and iron-sulfur (Fe-S) centers, to quinones in the photosynthetic chain and possibly in a chloroplast respiratory chain. The immediate electron acceptor for the enzyme in this species is believed to be plastoquinone. Couples the redox reaction to proton translocation, and thus conserves the redox energy in a proton gradient. The polypeptide is NAD(P)H-quinone oxidoreductase subunit 5, chloroplastic (ndhF) (Mesostigma viride (Green alga)).